The chain runs to 224 residues: uncharacterized protein (224 aa).

The disordered stretch occupies residues 203-224; sequence ELKKKKKKKIKKPKEIRNQKNV. The span at 204 to 214 shows a compositional bias: basic residues; sequence LKKKKKKKIKK. The span at 215–224 shows a compositional bias: basic and acidic residues; the sequence is PKEIRNQKNV.

This is an uncharacterized protein from Mycoplasma genitalium (strain ATCC 33530 / DSM 19775 / NCTC 10195 / G37) (Mycoplasmoides genitalium).